A 116-amino-acid polypeptide reads, in one-letter code: Flagellar transcriptional regulator FlhD (116 aa).

The protein belongs to the FlhD family. In terms of assembly, homodimer; disulfide-linked. Forms a heterohexamer composed of two FlhC and four FlhD subunits. Each FlhC binds a FlhD dimer, forming a heterotrimer, and a hexamer assembles by dimerization of two heterotrimers.

The protein localises to the cytoplasm. Functionally, functions in complex with FlhC as a master transcriptional regulator that regulates transcription of several flagellar and non-flagellar operons by binding to their promoter region. Activates expression of class 2 flagellar genes, including fliA, which is a flagellum-specific sigma factor that turns on the class 3 genes. Also regulates genes whose products function in a variety of physiological pathways. The protein is Flagellar transcriptional regulator FlhD of Enterobacter sp. (strain 22).